Reading from the N-terminus, the 269-residue chain is tRNA-cytidine(32) 2-sulfurtransferase (269 aa).

A PP-loop motif motif is present at residues 53 to 58 (SGGKDS). Positions 128, 131, and 218 each coordinate [4Fe-4S] cluster.

The protein belongs to the TtcA family. In terms of assembly, homodimer. Requires Mg(2+) as cofactor. [4Fe-4S] cluster is required as a cofactor.

It is found in the cytoplasm. It catalyses the reaction cytidine(32) in tRNA + S-sulfanyl-L-cysteinyl-[cysteine desulfurase] + AH2 + ATP = 2-thiocytidine(32) in tRNA + L-cysteinyl-[cysteine desulfurase] + A + AMP + diphosphate + H(+). It functions in the pathway tRNA modification. Catalyzes the ATP-dependent 2-thiolation of cytidine in position 32 of tRNA, to form 2-thiocytidine (s(2)C32). The sulfur atoms are provided by the cysteine/cysteine desulfurase (IscS) system. The chain is tRNA-cytidine(32) 2-sulfurtransferase from Pelobacter propionicus (strain DSM 2379 / NBRC 103807 / OttBd1).